A 602-amino-acid polypeptide reads, in one-letter code: Sodium-independent sulfate anion transporter (602 aa).

At 1–47 (MSPPMSPMKPPKGFAPMSCCWSTETMQKWLPFLGWLPDYTWYALKMD) the chain is on the extracellular side. Residues 48–68 (FIAGISVGLTVIPQALAYAEV) form a helical membrane-spanning segment. Position 69 (Ala69) is a topological domain, cytoplasmic. A helical transmembrane segment spans residues 70–90 (GLPPQYGLYSAFMGCFVYFFL). Topologically, residues 91–115 (GTSRDVTLGPTAIMSLLVSFYTFHE) are extracellular. Residues 116–136 (PAYAVLLAFLTGCIQLGMGFL) form a helical membrane-spanning segment. The Cytoplasmic portion of the chain corresponds to 137 to 143 (RLGLLLD). A helical transmembrane segment spans residues 144–164 (FISCPVIKGFTSAAAIIIGFG). The Extracellular portion of the chain corresponds to 165–193 (QIKNLLGLQHIPRQFFLQVYYTFHNIGET). Residues 194 to 214 (RVGDAVLGLVCMVLLLVLKLM) form a helical membrane-spanning segment. Topologically, residues 215 to 246 (RDHVPPVHPEMPTGVRLSHGLVWTATTARNAL) are cytoplasmic. The chain crosses the membrane as a helical span at residues 247-267 (VVSFAALVAYSFQVTGYQPFV). At 268 to 300 (LTGKTPEGLPDAHIPPFSVTTANGTISFTEMVQ) the chain is on the extracellular side. A helical membrane pass occupies residues 301–321 (GMGAGLVVVPLMGLLESIAVA). The Cytoplasmic portion of the chain corresponds to 322–337 (KSFASQNNYRINSNQE). The chain crosses the membrane as a helical span at residues 338–358 (LLALGFTNILGSLFSSYPVTG). The Extracellular portion of the chain corresponds to 359–370 (SFGRTAVNAQSG). A helical transmembrane segment spans residues 371-391 (VCTPAGGLMTGALVLLSLDYL). Over 392 to 394 (TSL) the chain is Cytoplasmic. The chain crosses the membrane as a helical span at residues 395–415 (FYYIPKSALAAVIIMAVVPLF). At 416 to 438 (DTKIVKTLWRVKRLDLLPLCVTF) the chain is on the extracellular side. The chain crosses the membrane as a helical span at residues 439–459 (LLCFWEVQYGILAGTLVSVLI). The Cytoplasmic portion of the chain corresponds to 460–602 (LLHSVARPKI…PEHKIALLKA (143 aa)). The STAS domain occupies 466 to 580 (RPKIQVSEGP…EAEKYLKQEP (115 aa)).

This sequence belongs to the SLC26A/SulP transporter (TC 2.A.53) family.

Its subcellular location is the cell membrane. The protein resides in the lysosome membrane. It is found in the apical cell membrane. The protein localises to the basolateral cell membrane. The catalysed reaction is hydrogencarbonate(in) + chloride(out) = hydrogencarbonate(out) + chloride(in). It carries out the reaction sulfate(in) + H(+)(in) = sulfate(out) + H(+)(out). The enzyme catalyses oxalate(in) + chloride(out) = oxalate(out) + chloride(in). In terms of biological role, sodium-independent anion exchanger mediating bicarbonate, chloride, sulfate and oxalate transport. Exhibits sodium-independent sulfate anion transporter activity that may cooperate with SLC26A2 to mediate DIDS-sensitive sulfate uptake into high endothelial venules endothelial cells (HEVEC). In the kidney, mediates chloride-bicarbonate exchange, facilitating V-ATPase-mediated acid secretion. May function as a chloride channel, playing an important role in moderating chloride homeostasis and neuronal activity in the cerebellum. This is Sodium-independent sulfate anion transporter from Bos taurus (Bovine).